A 482-amino-acid chain; its full sequence is Long chain base biosynthesis protein 1c (482 aa).

A helical transmembrane segment spans residues 33-53 (FGIHIDGHLVVEGLLIAAILF).

The protein belongs to the class-II pyridoxal-phosphate-dependent aminotransferase family. Heterodimer with LCB2. Component of the serine palmitoyltransferase (SPT) complex, composed of LCB1 and LCB2. Requires pyridoxal 5'-phosphate as cofactor.

The protein localises to the endoplasmic reticulum membrane. The enzyme catalyses L-serine + hexadecanoyl-CoA + H(+) = 3-oxosphinganine + CO2 + CoA. It participates in lipid metabolism; sphingolipid metabolism. Functionally, serine palmitoyltransferase (SPT). The heterodimer formed with LCB2 constitutes the catalytic core. This chain is Long chain base biosynthesis protein 1c, found in Oryza sativa subsp. japonica (Rice).